Consider the following 155-residue polypeptide: Ribosome maturation factor RimP (155 aa).

This sequence belongs to the RimP family.

Its subcellular location is the cytoplasm. Required for maturation of 30S ribosomal subunits. The protein is Ribosome maturation factor RimP of Prochlorococcus marinus (strain MIT 9301).